The chain runs to 540 residues: Putative BTB/POZ domain-containing protein R224 (540 aa).

In terms of domain architecture, BTB spans 16–88 (TDLELTLIDE…FYKNPIKYKN (73 aa)). A helical membrane pass occupies residues 356–376 (IFVSLLNDIIFVLSSINMYFI).

It belongs to the mimivirus BTB/WD family.

It is found in the membrane. The polypeptide is Putative BTB/POZ domain-containing protein R224 (Acanthamoeba polyphaga (Amoeba)).